The following is a 318-amino-acid chain: MFLMNILCLVIPILLAMAFLTLVERKILGYMQLRKGPNIVGPYGLLQPIADAIKLFIKEPLRPLTSSKLMFTLAPTLAFTLALSLWIPMPMPHPLINLNLGVLFILALSSLAVYSILWSGWASNSKYALIGALRAVAQTISYEVTLAIILLSIMMMNGSFTLSTLTTTQEHMWLIFPLWPLAMMWFISTLAETNRAPFDLTEGESELVSGFNVEYAAGPFALFFMAEYTNIIMMNALTTTLFLGAFHNPLFPELFTVNFITKTLILTMMFLWVRASYPRFRYDQLMHLLWKSFLPLTLALCMFHVSMPALSAGVPPHM.

The next 9 membrane-spanning stretches (helical) occupy residues Phe-2–Leu-22, Pro-37–Ile-57, Leu-69–Met-89, Leu-100–Gly-120, Val-136–Met-156, His-171–Ala-191, Ile-231–Phe-251, Glu-253–Val-273, and Phe-293–Gly-313.

The protein belongs to the complex I subunit 1 family. As to quaternary structure, core subunit of respiratory chain NADH dehydrogenase (Complex I) which is composed of 45 different subunits.

The protein resides in the mitochondrion inner membrane. It catalyses the reaction a ubiquinone + NADH + 5 H(+)(in) = a ubiquinol + NAD(+) + 4 H(+)(out). In terms of biological role, core subunit of the mitochondrial membrane respiratory chain NADH dehydrogenase (Complex I) which catalyzes electron transfer from NADH through the respiratory chain, using ubiquinone as an electron acceptor. Essential for the catalytic activity and assembly of complex I. This is NADH-ubiquinone oxidoreductase chain 1 (MT-ND1) from Euphractus sexcinctus (Six-banded armadillo).